Reading from the N-terminus, the 102-residue chain is Cell division topological specificity factor (102 aa).

The protein belongs to the MinE family.

Its function is as follows. Prevents the cell division inhibition by proteins MinC and MinD at internal division sites while permitting inhibition at polar sites. This ensures cell division at the proper site by restricting the formation of a division septum at the midpoint of the long axis of the cell. This Synechococcus sp. (strain CC9605) protein is Cell division topological specificity factor.